Consider the following 335-residue polypeptide: MGTHRIFIGLIALCCFCLPHLIEAKPFGVYQQQVFVDQSGHGNFTTIQKAIDSVPINNRHWFFINVKAGLYREKIKIPYEKPFIVLVGAGKRLTRVEWDDHYSVAQSPTFSTLADNTVVKSITFANSYNFPSKGKMNKNPRTPAVAALIGGDKSAFYSVGFAGIQDTLWDFDGRHYFHRCTIQGAVDFIFGTGQSIYQSCVIQVLGGQLEPGLAGYITAQGRTNPYDANGFIFINCLVYGTGMAFLGRPWRGYSRVIFYNSNLTDVVVPEGWDAWNFVGHENQLVFAEHGCFGSGANIGRRVKWVKKLSESAIQNLADLSFINRGGWVEDLPIPA.

The first 24 residues, 1–24 (MGTHRIFIGLIALCCFCLPHLIEA), serve as a signal peptide directing secretion. A glycan (N-linked (GlcNAc...) asparagine) is linked at asparagine 43. The active-site Proton donor is the aspartate 166. Residue aspartate 187 is the Nucleophile of the active site. 2 residues coordinate substrate: arginine 248 and tryptophan 250. Asparagine 262 is a glycosylation site (N-linked (GlcNAc...) asparagine).

This sequence belongs to the pectinesterase family. As to expression, expressed in flower buds.

It localises to the secreted. It is found in the cell wall. It carries out the reaction [(1-&gt;4)-alpha-D-galacturonosyl methyl ester](n) + n H2O = [(1-&gt;4)-alpha-D-galacturonosyl](n) + n methanol + n H(+). The protein operates within glycan metabolism; pectin degradation; 2-dehydro-3-deoxy-D-gluconate from pectin: step 1/5. Acts in the modification of cell walls via demethylesterification of cell wall pectin. In Arabidopsis thaliana (Mouse-ear cress), this protein is Probable pectinesterase 29 (PME29).